The chain runs to 227 residues: Lysosomal-associated transmembrane protein 4B (227 aa).

The next 4 membrane-spanning stretches (helical) occupy residues 26-46 (ILLG…LLSA), 72-92 (MCIA…ATYG), 100-120 (WIIP…LVAI), and 153-173 (CLVL…GYLI). A required for NEDD4 interaction region spans residues 205–222 (PPYDDATAVPSTAKEPPP).

Belongs to the LAPTM4/LAPTM5 transporter family. Homooligomer; upon reaching the lysosomes. Interacts with MCOLN1. Interacts with NEDD4; may play a role in the lysosomal sorting of LAPTM4B; enhances HGS association with NEDD4; mediates inhibition of EGFR degradation. Interacts with PIP5K1C; promotes SNX5 association with LAPTM4B; kinase activity of PIP5K1C is required; interaction is regulated by phosphatidylinositol 4,5-bisphosphate generated by PIP5K1C. Interacts with HGS; promotes HGS ubiquitination. Interacts with SNX5. Interacts with SLC3A2 and SLC7A5; recruits SLC3A2 and SLC7A5 to lysosomes to promote leucine uptake into these organelles and is required for mTORC1 activation. Interacts with LRRC32; decreases TGFB1 production in regulatory T cells. Interacts with BECN1; competes with EGFR for LAPTM4B binding; regulates EGFR activity. Interacts with EGFR; positively correlates with EGFR activation. Undergoes proteolytic cleavage following delivery to the lysosomes. In terms of processing, ubiquitinated by NEDD4.

Its subcellular location is the endomembrane system. It localises to the late endosome membrane. The protein localises to the cell membrane. The protein resides in the cell projection. It is found in the lysosome membrane. Its subcellular location is the endosome membrane. It localises to the endosome. The protein localises to the multivesicular body membrane. The protein resides in the multivesicular body lumen. Its function is as follows. Required for optimal lysosomal function. Blocks EGF-stimulated EGFR intraluminal sorting and degradation. Conversely by binding with the phosphatidylinositol 4,5-bisphosphate, regulates its PIP5K1C interaction, inhibits HGS ubiquitination and relieves LAPTM4B inhibition of EGFR degradation. Recruits SLC3A2 and SLC7A5 (the Leu transporter) to the lysosome, promoting entry of leucine and other essential amino acid (EAA) into the lysosome, stimulating activation of proton-transporting vacuolar (V)-ATPase protein pump (V-ATPase) and hence mTORC1 activation. Plays a role as negative regulator of TGFB1 production in regulatory T cells. Binds ceramide and facilitates its exit from late endosome in order to control cell death pathways. The polypeptide is Lysosomal-associated transmembrane protein 4B (Mus musculus (Mouse)).